The sequence spans 433 residues: Oxysterol-binding protein-like protein OBPa (433 aa).

The protein belongs to the OSBP family.

The polypeptide is Oxysterol-binding protein-like protein OBPa (OBPA) (Candida albicans (strain SC5314 / ATCC MYA-2876) (Yeast)).